Consider the following 389-residue polypeptide: Calreticulin (389 aa).

Residues 1 to 13 form the signal peptide; it reads MFTLFLLIALSSA. The tract at residues 12-189 is N-domain; it reads SAKVYFHETF…GVEKQEGKFD (178 aa). Residues Thr-20, Asn-52, and Asn-53 each contribute to the Ca(2+) site. A disulfide bond links Cys-96 and Cys-130. 4 residues coordinate an alpha-D-glucoside: Tyr-100, Lys-102, Tyr-121, and Asp-128. Repeat copies occupy residues 183-194, 202-213, 219-230, 237-248, 252-262, 266-276, and 280-290. The tract at residues 183-248 is 4 X approximate repeats; it reads KQEGKFDEDW…NAKKPEEWND (66 aa). The segment at 190–301 is P-domain; sequence EDWDMLAPKE…YVYDPELYKY (112 aa). Over residues 213-232 the composition is skewed to basic and acidic residues; the sequence is DEKEIDDPNDKKPEGWDDIP. Positions 213–256 are disordered; the sequence is DEKEIDDPNDKKPEGWDDIPKTIVDPNAKKPEEWNDEDDGEWEA. Positions 252–290 are 3 X approximate repeats; the sequence is GEWEAPTIENPEYKGEWKPKRIPNPAYKGEWVHPQIANP. The tract at residues 302–389 is C-domain; it reads DSFAYIGIDV…IKKEENKEEL (88 aa). An an alpha-D-glucoside-binding site is contributed by Asp-310. Asp-321 contacts Ca(2+). Residues 329-388 are a coiled coil; sequence IEEAEKEAKVILERNAAEKKMRDEIKEAEKQKEEEAKKEAEKQKEEETKEEIKKEENKEE. The interval 347-389 is disordered; it reads KKMRDEIKEAEKQKEEEAKKEAEKQKEEETKEEIKKEENKEEL. The short motif at 386-389 is the Prevents secretion from ER element; it reads KEEL.

The protein belongs to the calreticulin family. Interacts (via C-terminus) with host C1q.

Its subcellular location is the endoplasmic reticulum lumen. It is found in the cell projection. The protein resides in the uropodium. It localises to the cell surface. The protein localises to the phagocytic cup. Functionally, molecular calcium-binding chaperone promoting folding, oligomeric assembly and quality control in the ER via the calreticulin/calnexin cycle. This lectin may interact transiently with almost all of the monoglucosylated glycoproteins that are synthesized in the ER. Plays a role in host cell phagocytosis, possibly by acting as a receptor for host C1q. Binding to C1q prevents the activation of the host classical complement pathway. Also, binds to apoptotic host cells independently of host C1q and collectins. The polypeptide is Calreticulin (Entamoeba histolytica (strain ATCC 30459 / HM-1:IMSS / ABRM)).